We begin with the raw amino-acid sequence, 423 residues long: MTDLLSRAHAVALDAADPLRGLRDAFVFPQHGDDDQTYFVGNSLGLQPRAARAMVDEVLDRWGALAVEGHFTGPTQWLTYHQLVRDGLARVVGAQPGEVVAMNTLSVNLHLMMASFYRPTAERGAILIEAGAFPSDRHAVESQLRLHGLDPATHLIEVDADEPNGTVSMTAIAEAIAQHGPRLALVLWPGIQYRTGQAFDLAEIVRLARAQGAAVGFDLAHAVGNLPLTLHDDGVDFAVWCHYKYLNAGPGAVGGCFVHARHANSDLPRMAGWWGHEQQTRFRMDPQFVPSPGAEGWQLSNPPVLALAPLRASLALFDQAGMAALRAKSEQLTGHLEQLIHARVPQALQIVTPAEPARRGCQLSLRVAGGRARGRALFEHLHAAGVLGDWREPDVIRIAPVPLYNRFSDLHTFVEQVEAWAAA.

Residues leucine 105, serine 106, 133 to 136, aspartate 218, histidine 221, and tyrosine 243 each bind pyridoxal 5'-phosphate; that span reads FPSD. The residue at position 244 (lysine 244) is an N6-(pyridoxal phosphate)lysine. The pyridoxal 5'-phosphate site is built by tryptophan 273 and asparagine 301.

This sequence belongs to the kynureninase family. In terms of assembly, homodimer. Pyridoxal 5'-phosphate serves as cofactor.

It carries out the reaction L-kynurenine + H2O = anthranilate + L-alanine + H(+). The enzyme catalyses 3-hydroxy-L-kynurenine + H2O = 3-hydroxyanthranilate + L-alanine + H(+). Its pathway is amino-acid degradation; L-kynurenine degradation; L-alanine and anthranilate from L-kynurenine: step 1/1. The protein operates within cofactor biosynthesis; NAD(+) biosynthesis; quinolinate from L-kynurenine: step 2/3. Functionally, catalyzes the cleavage of L-kynurenine (L-Kyn) and L-3-hydroxykynurenine (L-3OHKyn) into anthranilic acid (AA) and 3-hydroxyanthranilic acid (3-OHAA), respectively. The sequence is that of Kynureninase from Xanthomonas euvesicatoria pv. vesicatoria (strain 85-10) (Xanthomonas campestris pv. vesicatoria).